We begin with the raw amino-acid sequence, 263 residues long: Versicolorin reductase 1 (263 aa).

NADP(+) is bound by residues Ile-22, Asp-68, Asn-95, and Arg-128. Active-site proton donor residues include Ser-144 and Ser-145. Residues Tyr-159, Lys-163, Ile-192, and Thr-194 each contribute to the NADP(+) site. The active-site Proton acceptor is Tyr-159. Residue Lys-163 is the Lowers pKa of active site Tyr of the active site.

It belongs to the short-chain dehydrogenases/reductases (SDR) family.

Its subcellular location is the cytoplasm. The protein resides in the cytosol. It functions in the pathway mycotoxin biosynthesis. Functionally, versicolorin reductase; part of the fragmented gene cluster that mediates the biosynthesis of dothistromin (DOTH), a polyketide toxin very similar in structure to the aflatoxin precursor, versicolorin B. The first step of the pathway is the conversion of acetate to norsolorinic acid (NOR) and requires the fatty acid synthase subunits hexA and hexB, as well as the polyketide synthase pksA. PksA combines a hexanoyl starter unit and 7 malonyl-CoA extender units to synthesize the precursor NOR. The hexanoyl starter unit is provided to the acyl-carrier protein (ACP) domain by the fungal fatty acid synthase hexA/hexB. The second step is the conversion of NOR to averantin (AVN) and requires the norsolorinic acid ketoreductase nor1, which catalyzes the dehydration of norsolorinic acid to form (1'S)-averantin. The cytochrome P450 monooxygenase avnA then catalyzes the hydroxylation of AVN to 5'hydroxyaverantin (HAVN). The next step is performed by adhA that transforms HAVN to averufin (AVF). Averufin might then be converted to hydroxyversicolorone by cypX and avfA. Hydroxyversicolorone is further converted versiconal hemiacetal acetate (VHA) by moxY. VHA is then the substrate for the versiconal hemiacetal acetate esterase est1 to yield versiconal (VAL). Versicolorin B synthase vbsA then converts VAL to versicolorin B (VERB) by closing the bisfuran ring. Then, the activity of the versicolorin B desaturase verB leads to versicolorin A (VERA). DotB, a predicted chloroperoxidase, may perform epoxidation of the A-ring of VERA. Alternatively, a cytochrome P450, such as cypX or avnA could catalyze this step. It is also possible that another, uncharacterized, cytochrome P450 enzyme is responsible for this step. Opening of the epoxide could potentially be achieved by the epoxide hydrolase epoA. However, epoA seems not to be required for DOTH biosynthesis, but other epoxide hydrolases may have the ability to complement this hydrolysis. Alternatively, opening of the epoxide ring could be achieved non-enzymatically. The next step is the deoxygenation of ring A to yield the 5,8-dihydroxyanthraquinone which is most likely catalyzed by the NADPH dehydrogenase encoded by ver1. The last stages of DOTH biosynthesis are proposed to involve hydroxylation of the bisfuran. OrdB and norB might have oxidative roles here. An alternative possibility is that cytochrome P450 monoogenases such as avnA and cypX might perform these steps in addition to previously proposed steps. The polypeptide is Versicolorin reductase 1 (Dothistroma septosporum (Red band needle blight fungus)).